The chain runs to 152 residues: Deoxyuridine 5'-triphosphate nucleotidohydrolase (152 aa).

Residues 71-73, N84, and 88-90 contribute to the substrate site; these read RSG and TID.

This sequence belongs to the dUTPase family. The cofactor is Mg(2+).

It carries out the reaction dUTP + H2O = dUMP + diphosphate + H(+). Its pathway is pyrimidine metabolism; dUMP biosynthesis; dUMP from dCTP (dUTP route): step 2/2. Functionally, this enzyme is involved in nucleotide metabolism: it produces dUMP, the immediate precursor of thymidine nucleotides and it decreases the intracellular concentration of dUTP so that uracil cannot be incorporated into DNA. The sequence is that of Deoxyuridine 5'-triphosphate nucleotidohydrolase from Roseobacter denitrificans (strain ATCC 33942 / OCh 114) (Erythrobacter sp. (strain OCh 114)).